Consider the following 241-residue polypeptide: MSAFACSAVAAPARGAIKANSSSVCAIENGKAVAVGTSKQVGAFKPVFAAAKAAKATTFSISCSAASDEVPDMGKRKLMNLLLLGAIAGPTIGAGGPFVSFLVPPKSGGGAGAGQAAKDAAGNDIKVEKWLETXKPGDRSLAQGLKGDATYLIVKEDGTLEKYGLNAVCTHLGCVVPWNQSEGKFMCPCHGSQYDRTGKVVRGPAPLSLALAHVNVLEDGVVAFEPWTETDFRTNTAPWWK.

The transit peptide at 1–62 (MSAFACSAVA…AAKATTFSIS (62 aa)) directs the protein to the cyanelle. Residues 83 to 103 (LLGAIAGPTIGAGGPFVSFLV) traverse the membrane as a helical segment. In terms of domain architecture, Rieske spans 127–223 (VEKWLETXKP…VNVLEDGVVA (97 aa)). 4 residues coordinate [2Fe-2S] cluster: cysteine 169, histidine 171, cysteine 187, and histidine 190. Cysteine 174 and cysteine 189 are disulfide-bonded.

This sequence belongs to the Rieske iron-sulfur protein family. In terms of assembly, the 4 large subunits of the cytochrome b6-f complex are cytochrome b6, subunit IV (17 kDa polypeptide, petD), cytochrome f and the Rieske protein, while the 4 small subunits are petG, petL, petM and petN. The complex functions as a dimer. [2Fe-2S] cluster serves as cofactor.

The protein resides in the plastid. It localises to the cyanelle thylakoid membrane. It catalyses the reaction 2 oxidized [plastocyanin] + a plastoquinol + 2 H(+)(in) = 2 reduced [plastocyanin] + a plastoquinone + 4 H(+)(out). Its function is as follows. Component of the cytochrome b6-f complex, which mediates electron transfer between photosystem II (PSII) and photosystem I (PSI), cyclic electron flow around PSI, and state transitions. This is Cytochrome b6-f complex iron-sulfur subunit 2, cyanelle (petC-2) from Cyanophora paradoxa.